We begin with the raw amino-acid sequence, 89 residues long: Albumin-1 (89 aa).

Ala-1 is a signal peptide. Intrachain disulfides connect Cys-4-Cys-21, Cys-8-Cys-23, and Cys-16-Cys-33. Positions 39–46 (LSSVAKMI) are excised as a propeptide.

In terms of processing, the C-terminal glycine may be removed from A1b.

A1b binds to basic 7S globulin (BG) and stimulates its phosphorylation activity. The polypeptide is Albumin-1 (LEG) (Vigna radiata var. radiata (Mung bean)).